Consider the following 421-residue polypeptide: Trimethyllysine dioxygenase, mitochondrial (421 aa).

A mitochondrion-targeting transit peptide spans 1–15; it reads MWCHRLSHLQSRLQD. An N6-acetyllysine modification is found at lysine 236. Positions 242, 244, and 389 each coordinate Fe cation.

The protein belongs to the gamma-BBH/TMLD family. As to quaternary structure, homodimer. Fe(2+) serves as cofactor. It depends on L-ascorbate as a cofactor.

It localises to the mitochondrion matrix. The catalysed reaction is N(6),N(6),N(6)-trimethyl-L-lysine + 2-oxoglutarate + O2 = (3S)-3-hydroxy-N(6),N(6),N(6)-trimethyl-L-lysine + succinate + CO2. It functions in the pathway amine and polyamine biosynthesis; carnitine biosynthesis. Functionally, converts trimethyllysine (TML) into hydroxytrimethyllysine (HTML). The sequence is that of Trimethyllysine dioxygenase, mitochondrial (TMLHE) from Bos taurus (Bovine).